Reading from the N-terminus, the 421-residue chain is Lipid II:glycine glycyltransferase (421 aa).

The protein belongs to the FemABX family. As to quaternary structure, monomer.

It is found in the cytoplasm. It carries out the reaction beta-D-GlcNAc-(1-&gt;4)-Mur2Ac(oyl-L-Ala-D-isoglutaminyl-L-Lys-D-Ala-D-Ala)-di-trans,octa-cis-undecaprenyl diphosphate + glycyl-tRNA(Gly) = beta-D-GlcNAc-(1-&gt;4)-Mur2Ac(oyl-L-Ala-D-isoglutaminyl-L-Lys-(N(6)-Gly)-D-Ala-D-Ala)-di-trans,octa-cis-undecaprenyl diphosphate + tRNA(Gly) + H(+). Its function is as follows. Catalyzes the incorporation of the first glycine of the pentaglycine interpeptide bridge, which is characteristic of the S.aureus peptidoglycan. This glycine is added to the epsilon-amino group of the L-lysine of the membrane-bound lipid II intermediate (GlcNAc-(beta-1,4)-N-acetylmuramic acid(-L-Ala-D-iGln-L-Lys-D-Ala-D-Ala)-pyrophosphoryl-undecaprenol), using glycyl-tRNA(Gly) as donor, in a ribosome-independent mechanism. Involved in methicillin resistance. The sequence is that of Lipid II:glycine glycyltransferase (femX) from Staphylococcus aureus (strain USA300).